Reading from the N-terminus, the 268-residue chain is Tryptophan synthase alpha chain (268 aa).

Residues Glu49 and Asp60 each act as proton acceptor in the active site.

The protein belongs to the TrpA family. As to quaternary structure, tetramer of two alpha and two beta chains.

It carries out the reaction (1S,2R)-1-C-(indol-3-yl)glycerol 3-phosphate + L-serine = D-glyceraldehyde 3-phosphate + L-tryptophan + H2O. Its pathway is amino-acid biosynthesis; L-tryptophan biosynthesis; L-tryptophan from chorismate: step 5/5. Functionally, the alpha subunit is responsible for the aldol cleavage of indoleglycerol phosphate to indole and glyceraldehyde 3-phosphate. The sequence is that of Tryptophan synthase alpha chain from Xanthomonas oryzae pv. oryzae (strain MAFF 311018).